Reading from the N-terminus, the 91-residue chain is Small ribosomal subunit protein uS15 (91 aa).

The protein belongs to the universal ribosomal protein uS15 family. As to quaternary structure, part of the 30S ribosomal subunit. Forms a bridge to the 50S subunit in the 70S ribosome, contacting the 23S rRNA.

Functionally, one of the primary rRNA binding proteins, it binds directly to 16S rRNA where it helps nucleate assembly of the platform of the 30S subunit by binding and bridging several RNA helices of the 16S rRNA. Forms an intersubunit bridge (bridge B4) with the 23S rRNA of the 50S subunit in the ribosome. The protein is Small ribosomal subunit protein uS15 of Hydrogenobaculum sp. (strain Y04AAS1).